We begin with the raw amino-acid sequence, 447 residues long: Na(+)-translocating NADH-quinone reductase subunit A (447 aa).

It belongs to the NqrA family. In terms of assembly, composed of six subunits; NqrA, NqrB, NqrC, NqrD, NqrE and NqrF.

The enzyme catalyses a ubiquinone + n Na(+)(in) + NADH + H(+) = a ubiquinol + n Na(+)(out) + NAD(+). Functionally, NQR complex catalyzes the reduction of ubiquinone-1 to ubiquinol by two successive reactions, coupled with the transport of Na(+) ions from the cytoplasm to the periplasm. NqrA to NqrE are probably involved in the second step, the conversion of ubisemiquinone to ubiquinol. The polypeptide is Na(+)-translocating NADH-quinone reductase subunit A (Klebsiella pneumoniae subsp. pneumoniae (strain ATCC 700721 / MGH 78578)).